We begin with the raw amino-acid sequence, 569 residues long: Glutamate--tRNA ligase (569 aa).

A 'HIGH' region motif is present at residues 99 to 109; that stretch reads PEPNGYPTLGH.

The protein belongs to the class-I aminoacyl-tRNA synthetase family. Glutamate--tRNA ligase type 2 subfamily.

It localises to the cytoplasm. It carries out the reaction tRNA(Glu) + L-glutamate + ATP = L-glutamyl-tRNA(Glu) + AMP + diphosphate. In terms of biological role, catalyzes the attachment of glutamate to tRNA(Glu) in a two-step reaction: glutamate is first activated by ATP to form Glu-AMP and then transferred to the acceptor end of tRNA(Glu). The protein is Glutamate--tRNA ligase of Korarchaeum cryptofilum (strain OPF8).